We begin with the raw amino-acid sequence, 428 residues long: Histidinol dehydrogenase homolog (428 aa).

Residues Q250 and H253 each coordinate Zn(2+). Residues E320 and H321 each act as proton acceptor in the active site. Positions 354 and 413 each coordinate Zn(2+).

This sequence belongs to the histidinol dehydrogenase family. Zn(2+) is required as a cofactor.

This is Histidinol dehydrogenase homolog from Pelagibacter ubique (strain HTCC1062).